The chain runs to 407 residues: 1-deoxy-D-xylulose 5-phosphate reductoisomerase (407 aa).

Positions 25, 26, 27, 28, 53, and 136 each coordinate NADPH. Lys137 provides a ligand contact to 1-deoxy-D-xylulose 5-phosphate. Glu138 is a binding site for NADPH. A Mn(2+)-binding site is contributed by Asp162. Residues Ser163, Glu164, Ser188, and His211 each contribute to the 1-deoxy-D-xylulose 5-phosphate site. Glu164 contacts Mn(2+). Position 217 (Gly217) interacts with NADPH. Ser224, Asn229, Lys230, and Glu233 together coordinate 1-deoxy-D-xylulose 5-phosphate. Glu233 serves as a coordination point for Mn(2+).

The protein belongs to the DXR family. The cofactor is Mg(2+). Requires Mn(2+) as cofactor.

It catalyses the reaction 2-C-methyl-D-erythritol 4-phosphate + NADP(+) = 1-deoxy-D-xylulose 5-phosphate + NADPH + H(+). It functions in the pathway isoprenoid biosynthesis; isopentenyl diphosphate biosynthesis via DXP pathway; isopentenyl diphosphate from 1-deoxy-D-xylulose 5-phosphate: step 1/6. Catalyzes the NADPH-dependent rearrangement and reduction of 1-deoxy-D-xylulose-5-phosphate (DXP) to 2-C-methyl-D-erythritol 4-phosphate (MEP). The polypeptide is 1-deoxy-D-xylulose 5-phosphate reductoisomerase (Bradyrhizobium diazoefficiens (strain JCM 10833 / BCRC 13528 / IAM 13628 / NBRC 14792 / USDA 110)).